A 350-amino-acid polypeptide reads, in one-letter code: Phosphotriesterase-related protein (350 aa).

The a divalent metal cation site is built by His-22, His-24, Glu-169, His-201, His-230, and Asp-298.

Belongs to the metallo-dependent hydrolases superfamily. Phosphotriesterase family. Requires a divalent metal cation as cofactor.

The polypeptide is Phosphotriesterase-related protein (Drosophila sechellia (Fruit fly)).